The following is a 338-amino-acid chain: Lipopolysaccharide 1,2-glucosyltransferase (338 aa).

UDP contacts are provided by residues 33–38 and 130–131; these read GVDANY and DA. The Mg(2+) site is built by aspartate 130 and aspartate 132. Short sequence motifs (DXD) lie at residues 130–132 and 215–217; these read DAD and DQD. Histidine 264 serves as a coordination point for Mg(2+). 264-270 is a binding site for UDP; the sequence is HYTGATK.

The protein belongs to the glycosyltransferase 8 family. It depends on Mg(2+) as a cofactor.

It is found in the cell inner membrane. The enzyme catalyses UDP-glucose + [lipopolysaccharide] = UDP + D-glucosyl-[lipopolysaccharide].. The catalysed reaction is alpha-D-Glc-(1-&gt;3)-[alpha-D-Gal-(1-&gt;6)]-alpha-D-Glc-(1-&gt;3)-[L-alpha-D-Hep-(1-&gt;7)]-4-O-PO3(2-)-L-alpha-D-Hep-(1-&gt;3)-4-O-PO3(2-)-L-alpha-D-Hep-(1-&gt;5)-[alpha-Kdo-(2-&gt;4)]-alpha-Kdo-(2-&gt;6)-lipid A + UDP-alpha-D-glucose = alpha-D-Glc-(1-&gt;2)-alpha-D-Glc-(1-&gt;3)-[alpha-D-Gal-(1-&gt;6)]-alpha-D-Glc-(1-&gt;3)-[L-alpha-D-Hep-(1-&gt;7)]-4-O-PO3(2-)-L-alpha-D-Hep-(1-&gt;3)-4-O-PO3(2-)-L-alpha-D-Hep-(1-&gt;5)-[alpha-Kdo-(2-&gt;4)]-alpha-Kdo-(2-&gt;6)-lipid A + UDP + H(+). It participates in bacterial outer membrane biogenesis; LPS core biosynthesis. Functionally, glucosyltransferase involved in the biosynthesis of the core oligosaccharide region of lipopolysaccharide (LPS). Catalyzes the addition of a glucose (glucose III) to the outer-core glucose II. In Escherichia coli (strain K12), this protein is Lipopolysaccharide 1,2-glucosyltransferase.